A 962-amino-acid chain; its full sequence is Insulin-degrading enzyme homolog (962 aa).

The segment covering 1-10 (MVANEQQQQQ) has biased composition (low complexity). Residues 1–21 (MVANEQQQQQQEEERKEVKLI) form a disordered region. Histidine 74 is a Zn(2+) binding site. Glutamate 77 functions as the Proton acceptor in the catalytic mechanism. Residues histidine 78 and glutamate 155 each contribute to the Zn(2+) site.

The protein belongs to the peptidase M16 family. As to quaternary structure, homodimer. Zn(2+) serves as cofactor.

The protein resides in the cytoplasm. The polypeptide is Insulin-degrading enzyme homolog (Dictyostelium discoideum (Social amoeba)).